Reading from the N-terminus, the 420-residue chain is Glutamyl-tRNA reductase (420 aa).

Residues 49–52, Ser-109, 114–116, and Gln-120 contribute to the substrate site; these read TCNR and EPQ. Residue Cys-50 is the Nucleophile of the active site. Residue 189-194 coordinates NADP(+); it reads GAGETI.

This sequence belongs to the glutamyl-tRNA reductase family. Homodimer.

The catalysed reaction is (S)-4-amino-5-oxopentanoate + tRNA(Glu) + NADP(+) = L-glutamyl-tRNA(Glu) + NADPH + H(+). Its pathway is porphyrin-containing compound metabolism; protoporphyrin-IX biosynthesis; 5-aminolevulinate from L-glutamyl-tRNA(Glu): step 1/2. Functionally, catalyzes the NADPH-dependent reduction of glutamyl-tRNA(Glu) to glutamate 1-semialdehyde (GSA). This is Glutamyl-tRNA reductase from Sodalis glossinidius (strain morsitans).